A 556-amino-acid chain; its full sequence is Dihydroxy-acid dehydratase (556 aa).

A [2Fe-2S] cluster-binding site is contributed by cysteine 47. Aspartate 79 is a binding site for Mg(2+). Cysteine 120 contacts [2Fe-2S] cluster. Aspartate 121 and lysine 122 together coordinate Mg(2+). The residue at position 122 (lysine 122) is an N6-carboxylysine. Cysteine 192 provides a ligand contact to [2Fe-2S] cluster. Glutamate 444 is a Mg(2+) binding site. The active-site Proton acceptor is the serine 470.

This sequence belongs to the IlvD/Edd family. As to quaternary structure, homodimer. The cofactor is [2Fe-2S] cluster. Mg(2+) serves as cofactor.

The catalysed reaction is (2R)-2,3-dihydroxy-3-methylbutanoate = 3-methyl-2-oxobutanoate + H2O. It catalyses the reaction (2R,3R)-2,3-dihydroxy-3-methylpentanoate = (S)-3-methyl-2-oxopentanoate + H2O. It participates in amino-acid biosynthesis; L-isoleucine biosynthesis; L-isoleucine from 2-oxobutanoate: step 3/4. It functions in the pathway amino-acid biosynthesis; L-valine biosynthesis; L-valine from pyruvate: step 3/4. Its function is as follows. Functions in the biosynthesis of branched-chain amino acids. Catalyzes the dehydration of (2R,3R)-2,3-dihydroxy-3-methylpentanoate (2,3-dihydroxy-3-methylvalerate) into 2-oxo-3-methylpentanoate (2-oxo-3-methylvalerate) and of (2R)-2,3-dihydroxy-3-methylbutanoate (2,3-dihydroxyisovalerate) into 2-oxo-3-methylbutanoate (2-oxoisovalerate), the penultimate precursor to L-isoleucine and L-valine, respectively. The protein is Dihydroxy-acid dehydratase of Prochlorococcus marinus (strain MIT 9313).